Here is a 134-residue protein sequence, read N- to C-terminus: MKKSAVLNEHISKAIATIGHFDLLTINDAGMPIPNDHRRIDLAVTKNLPRFIDVLATVLEEMEIQKIYLAEEIKEHNPTQLQQIKQLISSEIEIIFIPHEEMKSNLAHPLNKGNIRTGETTPYSNIALESNVTF.

His-20 serves as the catalytic Proton donor. Substrate contacts are provided by residues Asp-28, His-99, and 123–125; that span reads YSN.

This sequence belongs to the RbsD / FucU family. RbsD subfamily. As to quaternary structure, homodecamer.

Its subcellular location is the cytoplasm. It catalyses the reaction beta-D-ribopyranose = beta-D-ribofuranose. Its pathway is carbohydrate metabolism; D-ribose degradation; D-ribose 5-phosphate from beta-D-ribopyranose: step 1/2. In terms of biological role, catalyzes the interconversion of beta-pyran and beta-furan forms of D-ribose. In Staphylococcus aureus (strain Mu3 / ATCC 700698), this protein is D-ribose pyranase.